The sequence spans 397 residues: Elongation factor Tu (397 aa).

The 198-residue stretch at 10–207 folds into the tr-type G domain; the sequence is KPHVNIGTIG…AVDESIPDPV (198 aa). A G1 region spans residues 19–26; sequence GHVDHGKT. 19–26 is a GTP binding site; it reads GHVDHGKT. Mg(2+) is bound at residue T26. A G2 region spans residues 63–67; that stretch reads GITIN. Residues 84-87 form a G3 region; the sequence is DAPG. GTP is bound by residues 84-88 and 139-142; these read DAPGH and NKAD. Residues 139–142 are G4; sequence NKAD. A G5 region spans residues 177–179; that stretch reads SGL.

Belongs to the TRAFAC class translation factor GTPase superfamily. Classic translation factor GTPase family. EF-Tu/EF-1A subfamily. In terms of assembly, monomer.

Its subcellular location is the cytoplasm. It carries out the reaction GTP + H2O = GDP + phosphate + H(+). In terms of biological role, GTP hydrolase that promotes the GTP-dependent binding of aminoacyl-tRNA to the A-site of ribosomes during protein biosynthesis. The sequence is that of Elongation factor Tu from Tropheryma whipplei (strain TW08/27) (Whipple's bacillus).